Consider the following 160-residue polypeptide: Ribosomal RNA large subunit methyltransferase H (160 aa).

S-adenosyl-L-methionine-binding residues include Leu76 and Gly108.

It belongs to the RNA methyltransferase RlmH family. As to quaternary structure, homodimer.

It localises to the cytoplasm. The enzyme catalyses pseudouridine(1915) in 23S rRNA + S-adenosyl-L-methionine = N(3)-methylpseudouridine(1915) in 23S rRNA + S-adenosyl-L-homocysteine + H(+). In terms of biological role, specifically methylates the pseudouridine at position 1915 (m3Psi1915) in 23S rRNA. In Afipia carboxidovorans (strain ATCC 49405 / DSM 1227 / KCTC 32145 / OM5) (Oligotropha carboxidovorans), this protein is Ribosomal RNA large subunit methyltransferase H.